We begin with the raw amino-acid sequence, 955 residues long: Protein translocase subunit SecA (955 aa).

ATP contacts are provided by residues Gln-87, 105–109 (GEGKT), and Asp-494. Residues 861–955 (ASPAPAAPRP…KKAPRTKRKR (95 aa)) are disordered. The segment covering 874-888 (QEAAQQAQGTAAPSA) has biased composition (low complexity). Residues 943 to 955 (SKGKKAPRTKRKR) show a composition bias toward basic residues.

Belongs to the SecA family. In terms of assembly, monomer and homodimer. Part of the essential Sec protein translocation apparatus which comprises SecA, SecYEG and auxiliary proteins SecDF. Other proteins may also be involved.

The protein resides in the cell membrane. It is found in the cytoplasm. It carries out the reaction ATP + H2O + cellular proteinSide 1 = ADP + phosphate + cellular proteinSide 2.. In terms of biological role, part of the Sec protein translocase complex. Interacts with the SecYEG preprotein conducting channel. Has a central role in coupling the hydrolysis of ATP to the transfer of proteins into and across the cell membrane, serving as an ATP-driven molecular motor driving the stepwise translocation of polypeptide chains across the membrane. The polypeptide is Protein translocase subunit SecA (Rhodococcus jostii (strain RHA1)).